We begin with the raw amino-acid sequence, 293 residues long: ATP synthase gamma chain (293 aa).

Belongs to the ATPase gamma chain family. F-type ATPases have 2 components, CF(1) - the catalytic core - and CF(0) - the membrane proton channel. CF(1) has five subunits: alpha(3), beta(3), gamma(1), delta(1), epsilon(1). CF(0) has three main subunits: a, b and c.

It localises to the cell membrane. In terms of biological role, produces ATP from ADP in the presence of a proton gradient across the membrane. The gamma chain is believed to be important in regulating ATPase activity and the flow of protons through the CF(0) complex. The sequence is that of ATP synthase gamma chain from Methylacidiphilum infernorum (isolate V4) (Methylokorus infernorum (strain V4)).